Here is a 141-residue protein sequence, read N- to C-terminus: Granulocyte-macrophage colony-stimulating factor (141 aa).

The signal sequence occupies residues 1–17 (MWLQNLLFLGIVVYSLS). Residue S22 is glycosylated (O-linked (GalNAc...) serine). T27 carries an O-linked (GalNAc...) threonine glycan. Disulfide bonds link C68/C110 and C102/C135. 2 N-linked (GlcNAc...) asparagine glycosylation sites follow: N83 and N92.

The protein belongs to the GM-CSF family. In terms of assembly, monomer. The signaling GM-CSF receptor complex is a dodecamer of two head-to-head hexamers of two alpha, two beta, and two ligand subunits.

It is found in the secreted. Cytokine that stimulates the growth and differentiation of hematopoietic precursor cells from various lineages, including granulocytes, macrophages, eosinophils and erythrocytes. The sequence is that of Granulocyte-macrophage colony-stimulating factor (Csf2) from Mus musculus (Mouse).